Reading from the N-terminus, the 91-residue chain is Putative ribonuclease inhibitor YrdF (91 aa).

Belongs to the barstar family.

The protein localises to the cytoplasm. The polypeptide is Putative ribonuclease inhibitor YrdF (yrdF) (Bacillus subtilis (strain 168)).